The sequence spans 120 residues: MSKDQIIEAIKEMTVLELNDLVKAIEEEFGVTAAAPVAVAGGAAEGGAAEQTEFDVVLESAGSSKIGVIKVVREITGLGLKEAKALVDGAPAPIKEGVAKEEAEEIKGKLEEAGASVELK.

The protein belongs to the bacterial ribosomal protein bL12 family. In terms of assembly, homodimer. Part of the ribosomal stalk of the 50S ribosomal subunit. Forms a multimeric L10(L12)X complex, where L10 forms an elongated spine to which 2 to 4 L12 dimers bind in a sequential fashion. Binds GTP-bound translation factors.

Forms part of the ribosomal stalk which helps the ribosome interact with GTP-bound translation factors. Is thus essential for accurate translation. The sequence is that of Large ribosomal subunit protein bL12 from Shouchella clausii (strain KSM-K16) (Alkalihalobacillus clausii).